Reading from the N-terminus, the 246-residue chain is MAGHSKWANIKHRKAAQDAQRGKIFTKLIRELVTAAKIGGGDVSANPRLRAAVDKALSNNMTRDTINRAIDRGVGGGDDTNMETKIYEGYGPGGTAVMVECLSDNANRTISQVRPSFTKCGGNLGTEGSVGYLFSKKGLILIAEADEDALTEAAIEAGADDIQPQDDGSFEIYTAWEDLGSVRDGIEAAGFKVQEAEVTMIPSTTVDLDIETAPKLLRLIDMLEDCDDVQNVYHNGEICDEVASQL.

The protein belongs to the TACO1 family.

It is found in the cytoplasm. The chain is Probable transcriptional regulatory protein CGSHiEE_01480 from Haemophilus influenzae (strain PittEE).